Here is a 671-residue protein sequence, read N- to C-terminus: Major S-layer protein (671 aa).

A signal peptide spans 1 to 24; sequence MKRFAALSLAALMLLTVFASAASA. N-linked (GlcNAc...) asparagine glycans are attached at residues Asn36, Asn70, Asn116, and Asn350. The interval 594 to 650 is disordered; the sequence is GEEVSGEEETPEETPTGEVTETEGEEETPTEVTETPTEGEPAPEETETTESEGTTPG. Acidic residues predominate over residues 613 to 622; that stretch reads TETEGEEETP. Positions 623 to 633 are enriched in low complexity; the sequence is TEVTETPTEGE. Residues 634-643 show a composition bias toward acidic residues; that stretch reads PAPEETETTE. The chain crosses the membrane as a helical span at residues 647–667; sequence TTPGFGFMFGLVGLLAVVYLV.

This sequence belongs to the Methanosarcinales S-layer protein family. Glycosylated.

The protein localises to the secreted. It localises to the cell wall. The protein resides in the S-layer. Its subcellular location is the cell membrane. Functionally, S-layer protein. The S-layer is a paracrystalline mono-layered assembly of proteins which coat the surface of the cell. The chain is Major S-layer protein from Methanosarcina acetivorans (strain ATCC 35395 / DSM 2834 / JCM 12185 / C2A).